A 412-amino-acid chain; its full sequence is Peptidase T (412 aa).

His78 is a Zn(2+) binding site. Residue Asp80 is part of the active site. Zn(2+) is bound at residue Asp140. Catalysis depends on Glu174, which acts as the Proton acceptor. The Zn(2+) site is built by Glu175, Asp197, and His379.

The protein belongs to the peptidase M20B family. Zn(2+) is required as a cofactor.

Its subcellular location is the cytoplasm. It catalyses the reaction Release of the N-terminal residue from a tripeptide.. Cleaves the N-terminal amino acid of tripeptides. The chain is Peptidase T from Staphylococcus epidermidis (strain ATCC 12228 / FDA PCI 1200).